The sequence spans 163 residues: Staphylokinase (163 aa).

An N-terminal signal peptide occupies residues 1–27 (MLKRSLLFLTVLLLLFSFSSITNEVSA).

Belongs to the staphylokinase family.

The protein resides in the secreted. Its function is as follows. Potent plasminogen activator that converts plasminogen into plasmin. It forms a 1:1 complex with plasmin, which in turn activates other plasminogen molecules. The protein is Staphylokinase (sak) of Staphylococcus aureus (strain MW2).